The following is a 410-amino-acid chain: Cytochrome P450 monooxygenase mpsF (410 aa).

C355 contacts heme.

The protein belongs to the cytochrome P450 family. Heme is required as a cofactor.

It functions in the pathway secondary metabolite biosynthesis. Its function is as follows. Cytochrome P450 monooxygenase; part of the gene cluster that mediates the biosynthesis of macrophasetins, 3-decalinoyltetramic acids (DTAs) which feature a tetramate (pyrrolidine-2,4-dione) unit connected to a decalin fragment and that have potent bioactivities. The PKS-NRPS mpsA together with its associated enoylreductase partner mpsG incorporate one unit of acetyl-CoA, seven units of malonyl-CoA, and one unit of L-alanine to assemble the linear tetramic acid intermediate corresponding to the backbone of macrophasetins. Without the Diels-Alderase mpsD, the mpsA/G product can undergo the non-enzymatic intramolecular Diels-Alder (IMDA) reaction to generate both macrophasetin A and macrophasetin B. Catalyzed by mpsD, the linear tetramic acid intermediate is thoroughly converted to macrophasetin A via the endo-IMDA reaction in a regioselective and stereoselective manner. Finally, the cytochrome P450 monooxygenase mpsF catalyzes the hydroxylation at C20 to yield the end product macrophasetin C. The chain is Cytochrome P450 monooxygenase mpsF from Macrophomina phaseolina (strain MS6) (Charcoal rot fungus).